The chain runs to 122 residues: Probable dihydroneopterin aldolase (122 aa).

Substrate is bound by residues E21, Y54, and 73-74 (LE). Residue K101 is the Proton donor/acceptor of the active site.

The protein belongs to the DHNA family.

It carries out the reaction 7,8-dihydroneopterin = 6-hydroxymethyl-7,8-dihydropterin + glycolaldehyde. Its pathway is cofactor biosynthesis; tetrahydrofolate biosynthesis; 2-amino-4-hydroxy-6-hydroxymethyl-7,8-dihydropteridine diphosphate from 7,8-dihydroneopterin triphosphate: step 3/4. Catalyzes the conversion of 7,8-dihydroneopterin to 6-hydroxymethyl-7,8-dihydropterin. The sequence is that of Probable dihydroneopterin aldolase (folB) from Chlamydia muridarum (strain MoPn / Nigg).